The sequence spans 640 residues: Portal protein (640 aa).

The protein belongs to the herpesviridae portal protein family. As to quaternary structure, homododecamerizes. Interacts with terminase subunits TRM1 and TRM3.

The protein localises to the virion. Its subcellular location is the host nucleus. In terms of biological role, forms a portal in the viral capsid through which viral DNA is translocated during DNA packaging. Assembles as a dodecamer at a single fivefold axe of the T=16 icosahedric capsid. Binds to the molecular motor that translocates the viral DNA, termed terminase. This is Portal protein (U76) from Human herpesvirus 7 (strain JI) (HHV-7).